The sequence spans 474 residues: 3-isopropylmalate dehydratase large subunit (474 aa).

Cysteine 352, cysteine 413, and cysteine 416 together coordinate [4Fe-4S] cluster.

The protein belongs to the aconitase/IPM isomerase family. LeuC type 1 subfamily. As to quaternary structure, heterodimer of LeuC and LeuD. [4Fe-4S] cluster is required as a cofactor.

It catalyses the reaction (2R,3S)-3-isopropylmalate = (2S)-2-isopropylmalate. It functions in the pathway amino-acid biosynthesis; L-leucine biosynthesis; L-leucine from 3-methyl-2-oxobutanoate: step 2/4. In terms of biological role, catalyzes the isomerization between 2-isopropylmalate and 3-isopropylmalate, via the formation of 2-isopropylmaleate. The polypeptide is 3-isopropylmalate dehydratase large subunit (Pseudomonas savastanoi pv. phaseolicola (strain 1448A / Race 6) (Pseudomonas syringae pv. phaseolicola (strain 1448A / Race 6))).